Reading from the N-terminus, the 789-residue chain is Trimethylamine-oxide aldolase (789 aa).

This sequence in the C-terminal section; belongs to the GcvT family.

It catalyses the reaction trimethylamine N-oxide + H(+) = dimethylamine + formaldehyde. Its function is as follows. Catalyzes the conversion of trimethylamine N-oxide (TMAO) to dimethylamine (DMA) and formaldehyde. The sequence is that of Trimethylamine-oxide aldolase from Ruegeria pomeroyi (strain ATCC 700808 / DSM 15171 / DSS-3) (Silicibacter pomeroyi).